The sequence spans 535 residues: Berberine bridge enzyme-like 3 (535 aa).

An N-terminal signal peptide occupies residues 1-19; it reads MKEALFGLYLVLLVSGLEA. Cysteine 32 and cysteine 95 are joined by a disulfide. A glycan (N-linked (GlcNAc...) asparagine) is linked at asparagine 52. In terms of domain architecture, FAD-binding PCMH-type spans 73 to 247; sequence NNKNLLAIVV…LSWKINLVEV (175 aa). A cross-link (6-(S-cysteinyl)-8alpha-(pros-histidyl)-FAD (His-Cys)) is located at residues 110 to 172; that stretch reads HDNEGLSYVS…QTLAFPAGIC (63 aa). N-linked (GlcNAc...) asparagine glycans are attached at residues asparagine 214, asparagine 257, asparagine 292, asparagine 321, asparagine 341, asparagine 415, asparagine 439, and asparagine 444.

Belongs to the oxygen-dependent FAD-linked oxidoreductase family. FAD is required as a cofactor. Post-translationally, the FAD cofactor is bound via a bicovalent 6-S-cysteinyl, 8alpha-N1-histidyl FAD linkage.

It is found in the endoplasmic reticulum. It localises to the cell membrane. The protein localises to the secreted. Its subcellular location is the cell wall. Functionally, flavin-dependent oxidoreductase involved in the biosynthetic pathway to 4-hydroxyindole-3-carbonyl nitrile (4-OH-ICN), a cyanogenic metabolite required for inducible pathogen defense. Converts indole cyanohydrin into indole-3-carbonyl nitrile (ICN). This Arabidopsis thaliana (Mouse-ear cress) protein is Berberine bridge enzyme-like 3.